The following is a 422-amino-acid chain: G2/mitotic-specific cyclin-A (422 aa).

Residues Met1–Ser29 form a disordered region.

It belongs to the cyclin family. Cyclin AB subfamily.

Its function is as follows. Essential for the control of the cell cycle at the G2/M (mitosis) transition. Interacts with the CDC2 and CDK2 protein kinases to form MPF. G2/M cyclins accumulate steadily during G2 and are abruptly destroyed at mitosis. In Spisula solidissima (Atlantic surf-clam), this protein is G2/mitotic-specific cyclin-A.